The following is a 514-amino-acid chain: tRNA-2-methylthio-N(6)-dimethylallyladenosine synthase (514 aa).

The MTTase N-terminal domain maps to 68–186 (RTFLIKTYGC…LPEILEEAYL (119 aa)). Residues C77, C113, C147, C223, C227, and C230 each coordinate [4Fe-4S] cluster. The region spanning 209-439 (REGSTKAWVN…NKKVGHYSEK (231 aa)) is the Radical SAM core domain. Residues 442 to 505 (NQYEGKTVTV…QYSLNGTFKE (64 aa)) form the TRAM domain.

Belongs to the methylthiotransferase family. MiaB subfamily. Monomer. [4Fe-4S] cluster serves as cofactor.

Its subcellular location is the cytoplasm. The enzyme catalyses N(6)-dimethylallyladenosine(37) in tRNA + (sulfur carrier)-SH + AH2 + 2 S-adenosyl-L-methionine = 2-methylsulfanyl-N(6)-dimethylallyladenosine(37) in tRNA + (sulfur carrier)-H + 5'-deoxyadenosine + L-methionine + A + S-adenosyl-L-homocysteine + 2 H(+). Catalyzes the methylthiolation of N6-(dimethylallyl)adenosine (i(6)A), leading to the formation of 2-methylthio-N6-(dimethylallyl)adenosine (ms(2)i(6)A) at position 37 in tRNAs that read codons beginning with uridine. The protein is tRNA-2-methylthio-N(6)-dimethylallyladenosine synthase of Staphylococcus haemolyticus (strain JCSC1435).